Reading from the N-terminus, the 713-residue chain is Macrophage-expressed gene 1 protein (713 aa).

An N-terminal signal peptide occupies residues 1 to 19 (MNSFMALVLIWMIIACAEA). Residues 30-345 (GFQICKNALK…TAVRHYYTFN (316 aa)) form the MACPF domain. A disulfide bridge connects residues C34 and C70. Transmembrane regions (beta stranded) follow at residues 113–120 (LSINTELA) and 127–132 (GKFSTE). N185 carries N-linked (GlcNAc...) asparagine glycosylation. The next 2 beta stranded transmembrane spans lie at 235–244 (TVTASAGIAF) and 248–256 (VNFKVETDY). N269 carries N-linked (GlcNAc...) asparagine glycosylation. The cysteines at positions 350 and 369 are disulfide-linked. N375 carries an N-linked (GlcNAc...) asparagine glycan. Intrachain disulfides connect C385/C394, C432/C446, C436/C442, C531/C569, and C554/C574. The P2 stretch occupies residues 410 to 653 (PPGYSPVHLL…GDSNGMSGGE (244 aa)). Residues 654-674 (AAGITLGVTIALGIVITLAIY) form a helical membrane-spanning segment.

Belongs to the MPEG1 family. In terms of assembly, homooligomer; predominantly forms a homooligomeric arc-shaped pore complex instead of complete rings of 16 subunits. Proteolytically processed in two steps to generate the Macrophage-expressed gene 1 protein, processed form: cleaved by trypsin in proximity of the helical transmembrane domain releases the ectodomain into the lysosomal lumen to orient the pore-forming domain toward the endogenous membranes, and processed by the asparagine endopeptidase (LGMN). Proteolytic processing in antigen-containing vesicles is pH-dependent. In terms of processing, monoubiquitinated in response to bacterial infection; ubiquitination is required for vesicular localization and antibacterial activity and can be blocked by bacterial cell cycle inhibiting factor (cif). Expressed constitutively in a variety of cell types including macrophages, microglia, neutrophils, T cells, marginal zone B cells, keratinocytes, splenocytes and intestinal epithelial cells.

It is found in the cytoplasmic vesicle membrane. The protein localises to the cytoplasmic vesicle. It localises to the phagosome membrane. Forms arc- and ring-shaped pre-pores on top of the membrane at neutral to slightly acidic pH conditions and converts to pores upon acidification. Undergoes transition from the pre-pore to the pore in a processive clockwise hand-over-hand process. In the pore state, 2 alpha-helical regions refold into transmembrane hairpins (TMH1 and TMH2) in each protomer that form in the ensemble complex giant beta-barrel transmembrane pores. Functionally, pore-forming protein involved in both innate and adaptive immunity. Plays a central role in antigen cross-presentation in dendritic cells by forming a pore in antigen-containing compartments, thereby promoting delivery of antigens for cross-presentation. Also involved in innate immune response following bacterial infection; shows antibacterial activity against a wide spectrum of Gram-positive, Gram-negative and acid-fast bacteria. Reduces the viability of the intracytosolic pathogen L.monocytogenes by inhibiting acidification of the phagocytic vacuole of host cells which restricts bacterial translocation from the vacuole to the cytosol. Required for the antibacterial activity of reactive oxygen species and nitric oxide. Pore-forming protein that plays a central role in antigen cross-presentation in dendritic cells by mediating delivery of antigens for cross-presentation. Dendritic cells bridge innate and adaptive immunity by capturing exogenous antigens on MHC class-I molecules and presenting them to naive CD8(+) T-cells. Acts by forming a pore in antigen-containing compartments, promoting the release of antigens into the cytosol, enabling generation of MHCI:peptide complexes and T-cell priming. The sequence is that of Macrophage-expressed gene 1 protein from Mus musculus (Mouse).